The primary structure comprises 1388 residues: Putative ATP-dependent RNA helicase DHX57 (1388 aa).

Residues 1 to 11 (MSSSVRRKGKP) are compositionally biased toward basic residues. Disordered stretches follow at residues 1-107 (MSSS…MTSE) and 121-154 (EQGA…AGQE). Residues 34 to 51 (HGGGGGGGGSCGGGGGGS) show a composition bias toward gly residues. Over residues 79–89 (DSNKSKGETRP) the composition is skewed to basic and acidic residues. Phosphoserine occurs at positions 128 and 133. Residues 175-220 (PVPECAVSPLAVQKLSRYGFHTEHCQLALRICDGDLGAALEHLLRQ) enclose the UBA domain. The segment at 299–326 (DTSPETCKFYLKGNCKFGSKCKFKHEVP) adopts a C3H1-type zinc-finger fold. Ser475 is subject to Phosphoserine. In terms of domain architecture, Helicase ATP-binding spans 555–722 (LKLLSKHQVV…FSYCPVITIP (168 aa)). Residue 568–575 (GMTGCGKT) coordinates ATP. The DEVH box signature appears at 669–672 (DEVH). Positions 832–1012 (LIEALLEWIV…QLCLRIKILE (181 aa)) constitute a Helicase C-terminal domain.

Belongs to the DEAD box helicase family. DEAH subfamily.

The catalysed reaction is ATP + H2O = ADP + phosphate + H(+). In terms of biological role, probable ATP-binding RNA helicase. This chain is Putative ATP-dependent RNA helicase DHX57 (Dhx57), found in Mus musculus (Mouse).